Consider the following 149-residue polypeptide: Large ribosomal subunit protein uL13 (149 aa).

This sequence belongs to the universal ribosomal protein uL13 family. As to quaternary structure, part of the 50S ribosomal subunit.

In terms of biological role, this protein is one of the early assembly proteins of the 50S ribosomal subunit, although it is not seen to bind rRNA by itself. It is important during the early stages of 50S assembly. In Thermotoga maritima (strain ATCC 43589 / DSM 3109 / JCM 10099 / NBRC 100826 / MSB8), this protein is Large ribosomal subunit protein uL13.